The following is a 60-amino-acid chain: UPF0434 protein Ssed_2824 (60 aa).

This sequence belongs to the UPF0434 family.

The protein is UPF0434 protein Ssed_2824 of Shewanella sediminis (strain HAW-EB3).